Here is a 120-residue protein sequence, read N- to C-terminus: Seripauperin-8 (120 aa).

The first 20 residues, 1-20 (MVKLTSIAAGVAAIAATASA), serve as a signal peptide directing secretion.

The protein belongs to the SRP1/TIP1 family. Seripauperin subfamily.

In Saccharomyces cerevisiae (strain ATCC 204508 / S288c) (Baker's yeast), this protein is Seripauperin-8 (PAU8).